Consider the following 278-residue polypeptide: Polyamine aminopropyltransferase (278 aa).

In terms of domain architecture, PABS spans 3–240 (EGWFTEAVED…GWWSATLMVN (238 aa)). Gln-33 contributes to the S-methyl-5'-thioadenosine binding site. Residues His-64 and Asp-88 each contribute to the spermidine site. S-methyl-5'-thioadenosine-binding positions include Glu-108 and 139-140 (DG). The Proton acceptor role is filled by Asp-158. 158-161 (DSTD) is a spermidine binding site. Pro-165 provides a ligand contact to S-methyl-5'-thioadenosine.

Belongs to the spermidine/spermine synthase family. In terms of assembly, homodimer or homotetramer.

It is found in the cytoplasm. It catalyses the reaction S-adenosyl 3-(methylsulfanyl)propylamine + putrescine = S-methyl-5'-thioadenosine + spermidine + H(+). Its pathway is amine and polyamine biosynthesis; spermidine biosynthesis; spermidine from putrescine: step 1/1. Functionally, catalyzes the irreversible transfer of a propylamine group from the amino donor S-adenosylmethioninamine (decarboxy-AdoMet) to putrescine (1,4-diaminobutane) to yield spermidine. In Halorhodospira halophila (strain DSM 244 / SL1) (Ectothiorhodospira halophila (strain DSM 244 / SL1)), this protein is Polyamine aminopropyltransferase.